The following is a 386-amino-acid chain: DNA (cytosine-5)-methyltransferase 3-like (386 aa).

Positions 41-173 constitute an ADD domain; that stretch reads EVKANQRNIE…LKAFYDRESE (133 aa). Residues 52 to 82 form a GATA-type; atypical zinc finger; it reads ICICCGSLQVHTQHPLFEGGICAPCKDKFLD. The segment at 93–149 adopts a PHD-type; atypical zinc-finger fold; sequence QSYCSICCSGETLLICGNPDCTRCYCFECVDSLVGPGTSGKVHAMSNWVCYLCLPSS.

Homodimer. Heterotetramer composed of 1 DNMT3A homodimer and 2 DNMT3L subunits (DNMT3L-DNMT3A-DNMT3A-DNMT3L). Interacts with histone H3 (via N-terminus); interaction is strongly inhibited by methylation at lysine 4 (H3K4me). Interacts with EZH2; the interaction is direct. Interacts with SPOCD1. In terms of tissue distribution, expressed at low levels in several tissues including testis, ovary, and thymus.

The protein resides in the nucleus. Its function is as follows. Catalytically inactive regulatory factor of DNA methyltransferases that can either promote or inhibit DNA methylation depending on the context. Essential for the function of DNMT3A and DNMT3B: activates DNMT3A and DNMT3B by binding to their catalytic domain. Acts by accelerating the binding of DNA and S-adenosyl-L-methionine (AdoMet) to the methyltransferases and dissociates from the complex after DNA binding to the methyltransferases. Recognizes unmethylated histone H3 lysine 4 (H3K4me0) and induces de novo DNA methylation by recruitment or activation of DNMT3. Plays a key role in embryonic stem cells and germ cells. In germ cells, required for the methylation of imprinted loci together with DNMT3A. In male germ cells, specifically required to methylate retrotransposons, preventing their mobilization. Plays a key role in embryonic stem cells (ESCs) by acting both as an positive and negative regulator of DNA methylation. While it promotes DNA methylation of housekeeping genes together with DNMT3A and DNMT3B, it also acts as an inhibitor of DNA methylation at the promoter of bivalent genes. Interacts with the EZH2 component of the PRC2/EED-EZH2 complex, preventing interaction of DNMT3A and DNMT3B with the PRC2/EED-EZH2 complex, leading to maintain low methylation levels at the promoters of bivalent genes. Promotes differentiation of ESCs into primordial germ cells by inhibiting DNA methylation at the promoter of RHOX5, thereby activating its expression. The protein is DNA (cytosine-5)-methyltransferase 3-like (DNMT3L) of Homo sapiens (Human).